A 1016-amino-acid polypeptide reads, in one-letter code: Probable outer membrane protein PmpH (1016 aa).

Residues 1–24 (MPFSLRSTSFCFLACLCSYSYGFA) form the signal peptide. Residues 697–1016 (GELVPNSLWV…FVSMGLNRIF (320 aa)) enclose the Autotransporter domain.

The protein belongs to the PMP outer membrane protein family.

Its subcellular location is the secreted. It localises to the cell wall. The protein resides in the cell outer membrane. The protein is Probable outer membrane protein PmpH (pmpH) of Chlamydia trachomatis serovar D (strain ATCC VR-885 / DSM 19411 / UW-3/Cx).